Consider the following 158-residue polypeptide: uncharacterized protein (158 aa).

An FPG-type zinc finger spans residues 109-143 (RVHARTGLPCPVCGDTVREVSFADKSFQYCPTCQT).

This is an uncharacterized protein from Mycobacterium tuberculosis (strain ATCC 25618 / H37Rv).